Reading from the N-terminus, the 264-residue chain is Thiazole synthase (264 aa).

Catalysis depends on lysine 106, which acts as the Schiff-base intermediate with DXP. Residues glycine 167, 193–194 (AG), and 215–216 (NS) contribute to the 1-deoxy-D-xylulose 5-phosphate site.

It belongs to the ThiG family. As to quaternary structure, homotetramer. Forms heterodimers with either ThiH or ThiS.

Its subcellular location is the cytoplasm. It carries out the reaction [ThiS sulfur-carrier protein]-C-terminal-Gly-aminoethanethioate + 2-iminoacetate + 1-deoxy-D-xylulose 5-phosphate = [ThiS sulfur-carrier protein]-C-terminal Gly-Gly + 2-[(2R,5Z)-2-carboxy-4-methylthiazol-5(2H)-ylidene]ethyl phosphate + 2 H2O + H(+). Its pathway is cofactor biosynthesis; thiamine diphosphate biosynthesis. In terms of biological role, catalyzes the rearrangement of 1-deoxy-D-xylulose 5-phosphate (DXP) to produce the thiazole phosphate moiety of thiamine. Sulfur is provided by the thiocarboxylate moiety of the carrier protein ThiS. In vitro, sulfur can be provided by H(2)S. The polypeptide is Thiazole synthase (Azotobacter vinelandii (strain DJ / ATCC BAA-1303)).